The primary structure comprises 475 residues: Ribulose bisphosphate carboxylase large chain (475 aa).

Residues 1-2 constitute a propeptide that is removed on maturation; the sequence is MS. Position 3 is an N-acetylproline (Pro-3). Lys-14 bears the N6,N6,N6-trimethyllysine mark. The substrate site is built by Asn-123 and Thr-173. Lys-175 acts as the Proton acceptor in catalysis. Lys-177 provides a ligand contact to substrate. Residues Lys-201, Asp-203, and Glu-204 each contribute to the Mg(2+) site. At Lys-201 the chain carries N6-carboxylysine. The Proton acceptor role is filled by His-294. Arg-295, His-327, and Ser-379 together coordinate substrate.

Belongs to the RuBisCO large chain family. Type I subfamily. In terms of assembly, heterohexadecamer of 8 large chains and 8 small chains; disulfide-linked. The disulfide link is formed within the large subunit homodimers. It depends on Mg(2+) as a cofactor. Post-translationally, the disulfide bond which can form in the large chain dimeric partners within the hexadecamer appears to be associated with oxidative stress and protein turnover.

It localises to the plastid. The protein resides in the chloroplast. The enzyme catalyses 2 (2R)-3-phosphoglycerate + 2 H(+) = D-ribulose 1,5-bisphosphate + CO2 + H2O. It carries out the reaction D-ribulose 1,5-bisphosphate + O2 = 2-phosphoglycolate + (2R)-3-phosphoglycerate + 2 H(+). RuBisCO catalyzes two reactions: the carboxylation of D-ribulose 1,5-bisphosphate, the primary event in carbon dioxide fixation, as well as the oxidative fragmentation of the pentose substrate in the photorespiration process. Both reactions occur simultaneously and in competition at the same active site. This chain is Ribulose bisphosphate carboxylase large chain, found in Illicium oligandrum (Star anise).